A 626-amino-acid chain; its full sequence is Chaperone protein HtpG (626 aa).

The interval 1–339 (MSQNQETRGF…SNDLPLNVSR (339 aa)) is a; substrate-binding. The interval 340–555 (EILQDNKITA…NDQMTTQMAK (216 aa)) is b. The tract at residues 556–626 (LFAAAGQPVP…FIKRINKLLG (71 aa)) is c.

It belongs to the heat shock protein 90 family. As to quaternary structure, homodimer.

The protein localises to the cytoplasm. Functionally, molecular chaperone. Has ATPase activity. The polypeptide is Chaperone protein HtpG (Haemophilus influenzae (strain PittGG)).